An 889-amino-acid chain; its full sequence is Mitochondrial intermediate peptidase (889 aa).

The transit peptide at 1 to 30 directs the protein to the mitochondrion; that stretch reads MASTSKNAQRAAASVAHSYHVCLARRMSRL. The interval 60-112 is disordered; it reads SSSLAAQRVQRPTSAGPILTNPISDHEKDNDELRSLFDAPPTSSSANHLRSSG. The span at 83-94 shows a compositional bias: basic and acidic residues; sequence SDHEKDNDELRS. The segment covering 100 to 112 has biased composition (polar residues); it reads PTSSSANHLRSSG. Histidine 670 is a Zn(2+) binding site. The active site involves glutamate 671. 2 residues coordinate Zn(2+): histidine 674 and histidine 677.

This sequence belongs to the peptidase M3 family. Zn(2+) is required as a cofactor.

Its subcellular location is the mitochondrion matrix. It carries out the reaction Release of an N-terminal octapeptide as second stage of processing of some proteins imported into the mitochondrion.. Its function is as follows. Cleaves proteins, imported into the mitochondrion, to their mature size. While most mitochondrial precursor proteins are processed to the mature form in one step by mitochondrial processing peptidase (MPP), the sequential cleavage by MIP of an octapeptide after initial processing by MPP is a required step for a subgroup of nuclear-encoded precursor proteins destined for the matrix or the inner membrane. This is Mitochondrial intermediate peptidase (OCT1) from Mycosarcoma maydis (Corn smut fungus).